We begin with the raw amino-acid sequence, 73 residues long: Protein SlyX homolog (73 aa).

It belongs to the SlyX family.

The sequence is that of Protein SlyX homolog from Haemophilus influenzae (strain PittEE).